The following is a 342-amino-acid chain: Acetoin:2,6-dichlorophenolindophenol oxidoreductase subunit beta (342 aa).

Tetramer of 2 alpha and 2 beta subunits.

It functions in the pathway ketone degradation; acetoin degradation. Functionally, catalyzes the 2,6-dichlorophenolindophenol-dependent cleavage of acetoin into acetate and acetaldehyde. The chain is Acetoin:2,6-dichlorophenolindophenol oxidoreductase subunit beta (acoB) from Bacillus subtilis (strain 168).